Reading from the N-terminus, the 269-residue chain is Protein BASIC PENTACYSTEINE3 (269 aa).

It belongs to the BBR/BPC family. In terms of tissue distribution, expressed in seedlings, leaves and pistils. Detected in the base of flowers and tips of carpels, in petal vasculature, in anthers, in young rosette, in the lateral and primary roots, and in the gynobasal portion of the ovule.

It is found in the nucleus. Its function is as follows. Transcriptional regulator that specifically binds to GA-rich elements (GAGA-repeats) present in regulatory sequences of genes involved in developmental processes. This is Protein BASIC PENTACYSTEINE3 (BPC3) from Arabidopsis thaliana (Mouse-ear cress).